The following is a 146-amino-acid chain: Fluoride-specific ion channel FluC (146 aa).

4 helical membrane passes run 8–28 (FAIALGGSIGAVLRYLITLTV), 47–67 (LANLLGCCALGGLFQFSQALV), 91–111 (IGVLGSLTTFSTLIGETAVFA), and 121–141 (MLLGINVIAGWCLFWAAAAVV). The Na(+) site is built by Gly-95 and Thr-98.

This sequence belongs to the fluoride channel Fluc/FEX (TC 1.A.43) family.

It localises to the cell inner membrane. The enzyme catalyses fluoride(in) = fluoride(out). Na(+) is not transported, but it plays an essential structural role and its presence is essential for fluoride channel function. Its function is as follows. Fluoride-specific ion channel. Important for reducing fluoride concentration in the cell, thus reducing its toxicity. The polypeptide is Fluoride-specific ion channel FluC (Rhodopirellula baltica (strain DSM 10527 / NCIMB 13988 / SH1)).